A 208-amino-acid chain; its full sequence is MNVTIVDYNSGNISSVINSFKEVAKDKVNIEVTSDLNKIRSSDKVVLPGQGSFKSCVDALNAINGLVETLNEFTVTNKKPLLGICVGLQMFADLGYEETETKGLGWISGKVSKIDNQNNKFKLPHIGWNEINIVKESKIFEGIKNKSHMYFVHSYEFIPDDKSVISATTDYSSNIVCSVEKENIFGTQFHPEKSDKLGLKIIENFLNL.

The region spanning 2–208 (NVTIVDYNSG…LKIIENFLNL (207 aa)) is the Glutamine amidotransferase type-1 domain. Cys-85 functions as the Nucleophile in the catalytic mechanism. Residues His-190 and Glu-192 contribute to the active site.

Heterodimer of HisH and HisF.

The protein localises to the cytoplasm. It carries out the reaction 5-[(5-phospho-1-deoxy-D-ribulos-1-ylimino)methylamino]-1-(5-phospho-beta-D-ribosyl)imidazole-4-carboxamide + L-glutamine = D-erythro-1-(imidazol-4-yl)glycerol 3-phosphate + 5-amino-1-(5-phospho-beta-D-ribosyl)imidazole-4-carboxamide + L-glutamate + H(+). The enzyme catalyses L-glutamine + H2O = L-glutamate + NH4(+). The protein operates within amino-acid biosynthesis; L-histidine biosynthesis; L-histidine from 5-phospho-alpha-D-ribose 1-diphosphate: step 5/9. IGPS catalyzes the conversion of PRFAR and glutamine to IGP, AICAR and glutamate. The HisH subunit catalyzes the hydrolysis of glutamine to glutamate and ammonia as part of the synthesis of IGP and AICAR. The resulting ammonia molecule is channeled to the active site of HisF. This is Imidazole glycerol phosphate synthase subunit HisH from Pelagibacter ubique (strain HTCC1062).